A 499-amino-acid chain; its full sequence is Lanosterol 14-alpha demethylase (499 aa).

Residues 13-35 (SAVLQMSLTSVLLTASVFTLTLG) traverse the membrane as a helical segment. Heme is bound at residue cysteine 441.

It belongs to the cytochrome P450 family. Requires heme as cofactor. Strongly expressed in intestine. Moderately expressed in liver, with higher levels in females compared to males. Also detected at low levels in brain, eye, kidney and testis.

It is found in the endoplasmic reticulum membrane. It localises to the membrane. It carries out the reaction a 14alpha-methyl steroid + 3 reduced [NADPH--hemoprotein reductase] + 3 O2 = a Delta(14) steroid + formate + 3 oxidized [NADPH--hemoprotein reductase] + 4 H2O + 4 H(+). The enzyme catalyses lanosterol + 3 reduced [NADPH--hemoprotein reductase] + 3 O2 = 4,4-dimethyl-5alpha-cholesta-8,14,24-trien-3beta-ol + formate + 3 oxidized [NADPH--hemoprotein reductase] + 4 H2O + 4 H(+). It catalyses the reaction 24,25-dihydrolanosterol + 3 reduced [NADPH--hemoprotein reductase] + 3 O2 = 4,4-dimethyl-8,14-cholestadien-3beta-ol + formate + 3 oxidized [NADPH--hemoprotein reductase] + 4 H2O + 4 H(+). The catalysed reaction is a 14alpha-methyl steroid + reduced [NADPH--hemoprotein reductase] + O2 = a 14alpha-hydroxymethyl steroid + oxidized [NADPH--hemoprotein reductase] + H2O + H(+). It carries out the reaction a 14alpha-hydroxymethyl steroid + reduced [NADPH--hemoprotein reductase] + O2 = a 14alpha-formyl steroid + oxidized [NADPH--hemoprotein reductase] + 2 H2O + H(+). The enzyme catalyses a 14alpha-formyl steroid + reduced [NADPH--hemoprotein reductase] + O2 = a Delta(14) steroid + formate + oxidized [NADPH--hemoprotein reductase] + H2O + 2 H(+). It catalyses the reaction lanosterol + reduced [NADPH--hemoprotein reductase] + O2 = 32-hydroxylanosterol + oxidized [NADPH--hemoprotein reductase] + H2O + H(+). The catalysed reaction is 32-hydroxylanosterol + reduced [NADPH--hemoprotein reductase] + O2 = 32-oxolanosterol + oxidized [NADPH--hemoprotein reductase] + 2 H2O + H(+). It carries out the reaction 32-oxolanosterol + reduced [NADPH--hemoprotein reductase] + O2 = 4,4-dimethyl-5alpha-cholesta-8,14,24-trien-3beta-ol + formate + oxidized [NADPH--hemoprotein reductase] + H2O + 2 H(+). The enzyme catalyses 24,25-dihydrolanosterol + reduced [NADPH--hemoprotein reductase] + O2 = 32-hydroxy-24,25-dihydrolanosterol + oxidized [NADPH--hemoprotein reductase] + H2O + H(+). It catalyses the reaction 32-hydroxy-24,25-dihydrolanosterol + reduced [NADPH--hemoprotein reductase] + O2 = 32-oxo-24,25-dihydrolanosterol + oxidized [NADPH--hemoprotein reductase] + 2 H2O + H(+). The catalysed reaction is 32-oxo-24,25-dihydrolanosterol + reduced [NADPH--hemoprotein reductase] + O2 = 4,4-dimethyl-8,14-cholestadien-3beta-ol + formate + oxidized [NADPH--hemoprotein reductase] + H2O + 2 H(+). The protein operates within steroid biosynthesis; zymosterol biosynthesis; zymosterol from lanosterol: step 1/6. Its activity is regulated as follows. Inhibited by ketoconazole. May also be inhibited to a lesser extent by propiconazole. Its function is as follows. Sterol 14alpha-demethylase that plays a critical role in the cholesterol biosynthesis pathway, being cholesterol the major sterol component in deuterostome membranes as well as a precursor for steroid hormone synthesis. Cytochrome P450 monooxygenase that catalyzes the three-step oxidative removal of the 14alpha-methyl group (C-32) of sterols such as lanosterol (lanosta-8,24-dien-3beta-ol) and 24,25-dihydrolanosterol (DHL) in the form of formate, and converts the sterols to 4,4-dimethyl-5alpha-cholesta-8,14,24-trien-3beta-ol and 4,4-dimethyl-8,14-cholestadien-3beta-ol, respectively, which are intermediates of cholesterol biosynthesis. Can also demethylate substrates not intrinsic to deuterostomes, such as eburicol (24-methylene-24,25-dihydrolanosterol), but at a lower rate than DHL. In Danio rerio (Zebrafish), this protein is Lanosterol 14-alpha demethylase.